A 93-amino-acid polypeptide reads, in one-letter code: Co-chaperonin GroES (93 aa).

This sequence belongs to the GroES chaperonin family. In terms of assembly, heptamer of 7 subunits arranged in a ring. Interacts with the chaperonin GroEL.

The protein localises to the cytoplasm. Its function is as follows. Together with the chaperonin GroEL, plays an essential role in assisting protein folding. The GroEL-GroES system forms a nano-cage that allows encapsulation of the non-native substrate proteins and provides a physical environment optimized to promote and accelerate protein folding. GroES binds to the apical surface of the GroEL ring, thereby capping the opening of the GroEL channel. This is Co-chaperonin GroES from Streptococcus anginosus.